We begin with the raw amino-acid sequence, 703 residues long: Capsid protein VP1 (703 aa).

This sequence belongs to the caliciviridae capsid protein family. Homodimer. Homomultimer. Interacts with the minor capsid protein VP2. May bind to VP3 and Vpg proteins. Post-translationally, cleaved by the viral protease to produce mature capsid protein.

The protein localises to the virion. It is found in the host cytoplasm. Capsid protein self assembles to form an icosahedral capsid with a T=3 symmetry, about 38 nm in diameter, and consisting of 180 capsid proteins. A smaller form of capsid with a diameter of 23 nm might be capsid proteins assembled as icosahedron with T=1 symmetry. The capsid encapsulates the genomic RNA and is decorated with VP2 proteins. This San Miguel sea lion virus serotype 4 (SMSV-4) protein is Capsid protein VP1.